The following is a 251-amino-acid chain: Uroporphyrinogen-III C-methyltransferase (251 aa).

S-adenosyl-L-homocysteine contacts are provided by residues Pro-17, 93 to 95 (GGD), 123 to 124 (TS), Met-177, and Ala-206.

Belongs to the precorrin methyltransferase family.

It is found in the plastid. The protein localises to the chloroplast. The enzyme catalyses uroporphyrinogen III + 2 S-adenosyl-L-methionine = precorrin-2 + 2 S-adenosyl-L-homocysteine + H(+). It participates in cofactor biosynthesis; adenosylcobalamin biosynthesis; precorrin-2 from uroporphyrinogen III: step 1/1. The protein operates within porphyrin-containing compound metabolism; siroheme biosynthesis; precorrin-2 from uroporphyrinogen III: step 1/1. In terms of biological role, catalyzes the two successive C-2 and C-7 methylation reactions involved in the conversion of uroporphyrinogen III to precorrin-2 via the intermediate formation of precorrin-1. It is a step in the biosynthesis of both cobalamin (vitamin B12) and siroheme. The protein is Uroporphyrinogen-III C-methyltransferase (cobA) of Cyanidium caldarium (Red alga).